The primary structure comprises 652 residues: Tetracycline resistance protein TetP (652 aa).

The tr-type G domain maps to 2–252 (KKIINIGIVA…CSYFPFASND (251 aa)). GTP contacts are provided by residues 11–18 (AHVDAGKT), 75–79 (DTPGH), and 129–132 (NKLD).

It belongs to the TRAFAC class translation factor GTPase superfamily. Classic translation factor GTPase family. TetM/TetO subfamily.

Its function is as follows. Abolishes the inhibitory effect of tetracyclin on protein synthesis by a non-covalent modification of the ribosomes. This is Tetracycline resistance protein TetP (tetP) from Clostridium perfringens.